The following is a 331-amino-acid chain: 2-keto-3-deoxygluconate permease (331 aa).

A run of 10 helical transmembrane segments spans residues 10-30, 42-62, 77-97, 100-120, 141-161, 163-183, 200-220, 224-244, 254-274, and 289-309; these read IPGG…TLAP, GMIS…GASI, LVLT…MFIP, GIQT…AMDM, AFVL…LGSA, LASF…IGFA, PVLI…NVIM, LLGI…LIIA, TAGV…MIIA, and ALVA…TALY.

The protein belongs to the KdgT transporter family.

The protein localises to the cell inner membrane. It carries out the reaction 2-dehydro-3-deoxy-D-gluconate(in) + H(+)(in) = 2-dehydro-3-deoxy-D-gluconate(out) + H(+)(out). Functionally, catalyzes the proton-dependent uptake of 2-keto-3-deoxygluconate (KDG) into the cell. This chain is 2-keto-3-deoxygluconate permease, found in Enterobacter sp. (strain 638).